The sequence spans 350 residues: Protein RecA (350 aa).

Residue 68–75 (GPESSGKT) coordinates ATP.

It belongs to the RecA family.

Its subcellular location is the cytoplasm. Can catalyze the hydrolysis of ATP in the presence of single-stranded DNA, the ATP-dependent uptake of single-stranded DNA by duplex DNA, and the ATP-dependent hybridization of homologous single-stranded DNAs. It interacts with LexA causing its activation and leading to its autocatalytic cleavage. This Mycolicibacterium gilvum (strain PYR-GCK) (Mycobacterium gilvum (strain PYR-GCK)) protein is Protein RecA.